Reading from the N-terminus, the 298-residue chain is Ribosomal protein L11 methyltransferase (298 aa).

Residues Thr-152, Gly-176, Asp-198, and Asn-236 each contribute to the S-adenosyl-L-methionine site.

It belongs to the methyltransferase superfamily. PrmA family.

It is found in the cytoplasm. It catalyses the reaction L-lysyl-[protein] + 3 S-adenosyl-L-methionine = N(6),N(6),N(6)-trimethyl-L-lysyl-[protein] + 3 S-adenosyl-L-homocysteine + 3 H(+). Functionally, methylates ribosomal protein L11. This is Ribosomal protein L11 methyltransferase from Polaromonas sp. (strain JS666 / ATCC BAA-500).